Here is a 199-residue protein sequence, read N- to C-terminus: Small ribosomal subunit protein uS2 (199 aa).

This sequence belongs to the universal ribosomal protein uS2 family.

The polypeptide is Small ribosomal subunit protein uS2 (rps2) (Thermoplasma volcanium (strain ATCC 51530 / DSM 4299 / JCM 9571 / NBRC 15438 / GSS1)).